We begin with the raw amino-acid sequence, 435 residues long: Nuclear receptor subfamily 6 group A member 1 (435 aa).

Positions 11–86 (QRACLICGDR…MGMNRKAIRE (76 aa)) form a DNA-binding region, nuclear receptor. 2 NR C4-type zinc fingers span residues 14–34 (CLIC…CEGC) and 50–69 (CSRD…CQYC). The segment at 84-158 (IREDGMPGGR…STPSSSRSME (75 aa)) is disordered. Over residues 121–141 (NTSWSNNGDSDHSSPGNAVSE) the composition is skewed to polar residues. Low complexity predominate over residues 142–156 (SNQPSPVSTPSSSRS). The region spanning 204–435 (QSHTLINQLL…HSCKTIVTKE (232 aa)) is the NR LBD domain.

Belongs to the nuclear hormone receptor family. NR6 subfamily. Homodimer. Transiently expressed in differentiating cells of all embryonic germ layers. Expressed in an anterior to posterior concentration gradient from late gastrula to midneurula stages. Shows a complicated spatio-temporal pattern of expression during neurulation, being predominant in the neural plate and neural crest in midneurula embryos. At late tailbud (stage 30), mainly expressed in the head mesenchyme, gill arches and tail tip. Expression persists in the epidermis, somites and endoderm, and in the central nervous system, expression is restricted to the midbrain, hindbrain and part of the spinal cord. Isoforms Oo and Em are both expressed in the brain and isoform Oo is expressed in the germ cells of both the adult testis and ovary.

Its subcellular location is the cytoplasm. It localises to the nucleus. Its function is as follows. Probable orphan nuclear receptor. Binds to a response element containing repeats of the motif 5'-AGGTCA-3'. Required for anterior-posterior patterning during organogenesis. Acts with chordin to play a role in patterning the midbrain-hindbrain. Isoform Em is required for integrin-mediated cell matrix interaction during neurulation and for the morphogenetic movements leading to formation of the neural tube. Also mediates the effect of retinoic acid on primary neurogenesis. This Xenopus laevis (African clawed frog) protein is Nuclear receptor subfamily 6 group A member 1.